The following is a 544-amino-acid chain: Chaperonin GroEL 2 (544 aa).

Residues Thr29 to Pro32, Asp86 to Thr90, Gly413, Asn479 to Ala481, and Asp495 each bind ATP.

It belongs to the chaperonin (HSP60) family. Forms a cylinder of 14 subunits composed of two heptameric rings stacked back-to-back. Interacts with the co-chaperonin GroES.

It is found in the cytoplasm. It carries out the reaction ATP + H2O + a folded polypeptide = ADP + phosphate + an unfolded polypeptide.. Its function is as follows. Together with its co-chaperonin GroES, plays an essential role in assisting protein folding. The GroEL-GroES system forms a nano-cage that allows encapsulation of the non-native substrate proteins and provides a physical environment optimized to promote and accelerate protein folding. This chain is Chaperonin GroEL 2, found in Synechococcus sp. (strain CC9605).